The sequence spans 213 residues: MKNIADIRQEYTKSGLRESELPCDPLSLFSRWLQEAIDANVEEPTAIIVGTVSPEGRPSTRTVLLKGLHDGKFIFYTNYESRKGRQLAQNPYISLSFVWHELERQVHIEGTAAKVSPEESDEYFRKRPYKSRIGARISPQSQPIASRMQLIRAFVKEAARWLGKEVERPDNWGGYAVTPTRMEFWQGRPNRLHDRFLYTLKTDGKWEINRLSP.

Residues 8 to 11 (RQEY) and K66 contribute to the substrate site. FMN contacts are provided by residues 61-66 (RTVLLK), 76-77 (YT), R82, K83, and Q105. Substrate is bound by residues Y123, R127, and S131. FMN-binding positions include 140 to 141 (QS) and W185. 191–193 (RLH) provides a ligand contact to substrate. Residue R195 coordinates FMN.

Belongs to the pyridoxamine 5'-phosphate oxidase family. Homodimer. Requires FMN as cofactor.

The enzyme catalyses pyridoxamine 5'-phosphate + O2 + H2O = pyridoxal 5'-phosphate + H2O2 + NH4(+). It catalyses the reaction pyridoxine 5'-phosphate + O2 = pyridoxal 5'-phosphate + H2O2. The protein operates within cofactor metabolism; pyridoxal 5'-phosphate salvage; pyridoxal 5'-phosphate from pyridoxamine 5'-phosphate: step 1/1. Its pathway is cofactor metabolism; pyridoxal 5'-phosphate salvage; pyridoxal 5'-phosphate from pyridoxine 5'-phosphate: step 1/1. Its function is as follows. Catalyzes the oxidation of either pyridoxine 5'-phosphate (PNP) or pyridoxamine 5'-phosphate (PMP) into pyridoxal 5'-phosphate (PLP). This Bacteroides thetaiotaomicron (strain ATCC 29148 / DSM 2079 / JCM 5827 / CCUG 10774 / NCTC 10582 / VPI-5482 / E50) protein is Pyridoxine/pyridoxamine 5'-phosphate oxidase.